Consider the following 350-residue polypeptide: Ion-translocating oxidoreductase complex subunit D (350 aa).

4 consecutive transmembrane segments (helical) span residues 36 to 56 (FYFF…IALL), 68 to 88 (PIIS…IGVS), 89 to 109 (IPSI…IVIV), and 120 to 140 (IFNP…VQMT). Residue Thr-185 is modified to FMN phosphoryl threonine. 5 helical membrane-spanning segments follow: residues 212-232 (GFGV…LAML), 239-259 (WQIS…GYLL), 265-285 (IGPL…FIAT), 291-311 (ATSV…VYVI), and 315-335 (GGYP…APFI).

Belongs to the NqrB/RnfD family. In terms of assembly, the complex is composed of six subunits: RnfA, RnfB, RnfC, RnfD, RnfE and RnfG. Requires FMN as cofactor.

Its subcellular location is the cell inner membrane. Its function is as follows. Part of a membrane-bound complex that couples electron transfer with translocation of ions across the membrane. This Shewanella piezotolerans (strain WP3 / JCM 13877) protein is Ion-translocating oxidoreductase complex subunit D.